We begin with the raw amino-acid sequence, 363 residues long: MKLSLLSTFAAVIIGALALPQGPGGGGSVTCPGGQSTSNSQCCVWFDVLDDLQTNFYQGSKCESPVRKILRIVFHDAIGFSPALTAAGQFGGGGADGSIIAHSNIELAFPANGGLTDTIEALRAVGINHGVSFGDLIQFATAVGMSNCPGSPRLEFLTGRSNSSQPSPPSLIPGPGNIVTAILDRMGDAGFSPDEVVDLLAAHSLASQEGLNSAIFRSPLDSTPQVFDTQFYIETLLKGTTQPGPSLGFAEELSPFPGEFRMRSDALLARDSRTACRWQSMTSSNEVMGQRYRAAMAKMSVLGFDRNALTDCSDVIPSAVSNNAAPVIPGGLTVDDIEVSCPSEPFPEIATASGPLPSLAPAP.

Positions 1 to 20 are cleaved as a signal peptide; it reads MKLSLLSTFAAVIIGALALP. At Q21 the chain carries Pyrrolidone carboxylic acid. 4 disulfide bridges follow: C31–C43, C42–C312, C62–C148, and C276–C341. H75 serves as the catalytic Proton acceptor. D76, G94, D96, and S98 together coordinate Ca(2+). Residue N162 is glycosylated (N-linked (GlcNAc...) (high mannose) asparagine). H203 contributes to the heme b binding site. Residues S204, D221, T223, V226, and D228 each coordinate Ca(2+). O-linked (Man...) serine glycosylation is present at S358.

The protein belongs to the peroxidase family. Ligninase subfamily. It depends on Ca(2+) as a cofactor. Heme b is required as a cofactor.

The protein localises to the secreted. It carries out the reaction 2 a phenolic donor + H2O2 = 2 a phenolic radical donor + 2 H2O. The polypeptide is Peroxidase (CIP1) (Coprinopsis cinerea (strain Okayama-7 / 130 / ATCC MYA-4618 / FGSC 9003) (Inky cap fungus)).